Reading from the N-terminus, the 303-residue chain is Beta-lactamase L2 (303 aa).

The tat-type signal signal peptide spans 1 to 35 (MLARRRFLQFSGAAVASSLALPLLARAAGKTAASA). The active-site Acyl-ester intermediate is S83. 247–249 (KTG) provides a ligand contact to substrate.

This sequence belongs to the class-A beta-lactamase family. In terms of processing, predicted to be exported by the Tat system. The position of the signal peptide cleavage has not been experimentally proven.

The catalysed reaction is a beta-lactam + H2O = a substituted beta-amino acid. In Stenotrophomonas maltophilia (Pseudomonas maltophilia), this protein is Beta-lactamase L2.